The sequence spans 204 residues: Holliday junction resolvase RecU (204 aa).

A disordered region spans residues 1–24 (MTIHYPNGQQPVQHYNTHNELPTP). The segment covering 7–24 (NGQQPVQHYNTHNELPTP) has biased composition (polar residues). Thr87, Asp89, Asp102, and Gln121 together coordinate Mg(2+).

It belongs to the RecU family. Mg(2+) serves as cofactor.

It localises to the cytoplasm. It catalyses the reaction Endonucleolytic cleavage at a junction such as a reciprocal single-stranded crossover between two homologous DNA duplexes (Holliday junction).. Endonuclease that resolves Holliday junction intermediates in genetic recombination. Cleaves mobile four-strand junctions by introducing symmetrical nicks in paired strands. Promotes annealing of linear ssDNA with homologous dsDNA. Required for DNA repair, homologous recombination and chromosome segregation. In Limosilactobacillus reuteri (strain DSM 20016) (Lactobacillus reuteri), this protein is Holliday junction resolvase RecU.